Reading from the N-terminus, the 570-residue chain is Molecular chaperone MKKS (570 aa).

Glu-192–Ser-199 is a binding site for ATP. Residues Lys-198–Val-370 are substrate-binding apical domain.

The protein belongs to the TCP-1 chaperonin family. In terms of assembly, component of a complex composed at least of MKKS, BBS10, BBS12, TCP1, CCT2, CCT3, CCT4, CCT5 and CCT8. Interacts with STUB1. Interacts with BBS2 (via coiled coil domain). Interacts with CCDC28B. Interacts with BBS12. Interacts with SMARCC1, a component of the SWI/SNF complexes; the interaction takes place predominantly in the cytoplasm and may modulate SMARCC1 location. Interacts with DLEC1. Widely expressed in adult and fetal tissues. Expressed in the developing heart, brain retina, limb buds, as well as in the developing neural tube. Expressed in the embryo in the first and second branchial arches. Expressed in parafin embedded tissue sections of brain, kidney, retina, olfactory epithelium and the ependymal layer of ventricles. Detected only in restricted regions of these tissue sections, including the ciliated border of renal tubules, the connecting cilium and the inner and outer nuclear layers of retina, and the ciliated layer of olfactory epithelia.

The protein resides in the cytoplasm. It localises to the cytoskeleton. The protein localises to the microtubule organizing center. Its subcellular location is the centrosome. It is found in the cytosol. The protein resides in the nucleus. In terms of biological role, probable molecular chaperone that assists the folding of proteins upon ATP hydrolysis. Plays a role in the assembly of BBSome, a complex involved in ciliogenesis regulating transports vesicles to the cilia. May play a role in protein processing in limb, cardiac and reproductive system development. May play a role in cytokinesis. This Mus musculus (Mouse) protein is Molecular chaperone MKKS (Mkks).